The chain runs to 96 residues: UPF0251 protein VPA0321 (96 aa).

It belongs to the UPF0251 family.

This chain is UPF0251 protein VPA0321, found in Vibrio parahaemolyticus serotype O3:K6 (strain RIMD 2210633).